A 461-amino-acid chain; its full sequence is Acetylcholine receptor subunit alpha (461 aa).

The N-terminal stretch at 1-24 is a signal peptide; sequence MILCSYWHVGLVLLLFSCCGLVLG. The Extracellular segment spans residues 25-234; the sequence is SEHETRLVAN…ITYHFIMQRI (210 aa). Disulfide bonds link Cys152–Cys166 and Cys216–Cys217. An N-linked (GlcNAc...) asparagine glycan is attached at Asn165. A run of 3 helical transmembrane segments spans residues 235–259, 267–285, and 301–320; these read PLYF…VFYL, MTLS…LVIV, and YMLF…VVVI. The Cytoplasmic segment spans residues 321-432; sequence NTHHRSPSTH…WKYVAMVIDH (112 aa). A helical membrane pass occupies residues 433–451; that stretch reads ILLCVFMLICIIGTVSVFA.

The protein belongs to the ligand-gated ion channel (TC 1.A.9) family. Acetylcholine receptor (TC 1.A.9.1) subfamily. Alpha-1/CHRNA1 sub-subfamily. In terms of assembly, pentamer of two alpha chains, and one each of the beta, delta, and gamma chains.

It localises to the postsynaptic cell membrane. It is found in the cell membrane. The catalysed reaction is K(+)(in) = K(+)(out). It carries out the reaction Na(+)(in) = Na(+)(out). Functionally, upon acetylcholine binding, the AChR responds by an extensive change in conformation that affects all subunits and leads to opening of an ion-conducting channel across the plasma membrane. The protein is Acetylcholine receptor subunit alpha (CHRNA1) of Tetronarce californica (Pacific electric ray).